Reading from the N-terminus, the 137-residue chain is Phosphoinositide-interacting protein (137 aa).

The next 2 membrane-spanning stretches (helical) occupy residues 56 to 76 (IVIM…TCLA) and 94 to 114 (PGFL…VPII).

As to quaternary structure, interacts with TRPV1.

It is found in the membrane. In terms of biological role, regulatory subunit of TRPV1, a molecular sensor of noxious heat and capsaicin. Positively regulates TRPV1 channel activity via phosphatidylinositol 4,5-bisphosphate (PIP2). Binds various phosphoinositide, including phosphatidylinositol 4,5-bisphosphate (PIP2), but not phosphatidylinositol (PI). The chain is Phosphoinositide-interacting protein (PIRT) from Homo sapiens (Human).